Here is a 210-residue protein sequence, read N- to C-terminus: Outer-membrane lipoprotein LolB (210 aa).

The N-terminal stretch at Met-1–Gly-29 is a signal peptide. Residue Cys-30 is the site of N-palmitoyl cysteine attachment. Cys-30 carries the S-diacylglycerol cysteine lipid modification.

This sequence belongs to the LolB family. As to quaternary structure, monomer.

The protein localises to the cell outer membrane. Functionally, plays a critical role in the incorporation of lipoproteins in the outer membrane after they are released by the LolA protein. The protein is Outer-membrane lipoprotein LolB of Coxiella burnetii (strain RSA 493 / Nine Mile phase I).